Here is a 505-residue protein sequence, read N- to C-terminus: Alpha-internexin (505 aa).

Positions 1 to 87 (MSFGSEHYLC…SQAAARTNEY (87 aa)) are head. A Phosphoserine modification is found at Ser-72. Positions 88–129 (KIIRTNEKEQLQGLNDRFAVFIEKVHQLETQNRALEAELAAL) are coil 1A. Residues 94–407 (EKEQLQGLND…KLLEGEETRF (314 aa)) enclose the IF rod domain. The tract at residues 130-142 (RQRHAEPSRVGEL) is linker 1. The tract at residues 143 to 238 (FQRELRELRA…QVHDEEVAEL (96 aa)) is coil 1B. The residue at position 219 (Ser-219) is a Phosphoserine. Positions 239–262 (LATLQASSQAAAEVDVAVAKPDLT) are linker 2. The coil 2 stretch occupies residues 263 to 408 (SALREIRAQY…LLEGEETRFS (146 aa)). Lys-290 is subject to N6-acetyllysine. A phosphoserine mark is found at Ser-335, Ser-474, and Ser-502. The tract at residues 409–505 (TSGLSISGLN…EITTSSSQKM (97 aa)) is tail. The interval 438-505 (KVSSAGLSLK…EITTSSSQKM (68 aa)) is disordered. Residues 495–505 (EEITTSSSQKM) are compositionally biased toward low complexity.

Belongs to the intermediate filament family. As to quaternary structure, forms homodimers (in vitro). Forms heterodimers with NEFL, NEFM or NEFH (in vitro). O-glycosylated. Expressed in the dorsal root ganglion neurons (at protein level).

Its function is as follows. Class-IV neuronal intermediate filament that is able to self-assemble. It is involved in the morphogenesis of neurons. It may form an independent structural network without the involvement of other neurofilaments or it may cooperate with NEFL to form the filamentous backbone to which NEFM and NEFH attach to form the cross-bridges. May also cooperate with the neuronal intermediate filament protein PRPH to form filamentous networks. The protein is Alpha-internexin (Ina) of Rattus norvegicus (Rat).